The chain runs to 837 residues: Protein translocase subunit SecA 1 (837 aa).

ATP contacts are provided by residues Gln85, 103-107 (GEGKT), and Asp492. Positions 787 to 806 (QEVAKGEAVHPKEDGEEPKR) are enriched in basic and acidic residues. The tract at residues 787 to 811 (QEVAKGEAVHPKEDGEEPKRKPVRK) is disordered. Cys821, Cys823, Cys832, and Cys833 together coordinate Zn(2+).

The protein belongs to the SecA family. In terms of assembly, monomer and homodimer. Part of the essential Sec protein translocation apparatus which comprises SecA, SecYEG and auxiliary proteins SecDF. Other proteins may also be involved. Zn(2+) is required as a cofactor.

The protein resides in the cell membrane. Its subcellular location is the cytoplasm. It carries out the reaction ATP + H2O + cellular proteinSide 1 = ADP + phosphate + cellular proteinSide 2.. Part of the Sec protein translocase complex. Interacts with the SecYEG preprotein conducting channel. Has a central role in coupling the hydrolysis of ATP to the transfer of proteins into and across the cell membrane, serving as an ATP-driven molecular motor driving the stepwise translocation of polypeptide chains across the membrane. This chain is Protein translocase subunit SecA 1, found in Geobacillus kaustophilus (strain HTA426).